The chain runs to 248 residues: tRNA (guanine-N(1)-)-methyltransferase (248 aa).

S-adenosyl-L-methionine is bound by residues glycine 113 and 133 to 138 (IGDFVL).

The protein belongs to the RNA methyltransferase TrmD family. Homodimer.

The protein resides in the cytoplasm. The catalysed reaction is guanosine(37) in tRNA + S-adenosyl-L-methionine = N(1)-methylguanosine(37) in tRNA + S-adenosyl-L-homocysteine + H(+). In terms of biological role, specifically methylates guanosine-37 in various tRNAs. The chain is tRNA (guanine-N(1)-)-methyltransferase from Dehalococcoides mccartyi (strain ATCC BAA-2266 / KCTC 15142 / 195) (Dehalococcoides ethenogenes (strain 195)).